Here is a 192-residue protein sequence, read N- to C-terminus: Thymidine kinase (192 aa).

ATP contacts are provided by residues Ser-9–Ser-16 and Asp-87–Gln-90. Glu-88 acts as the Proton acceptor in catalysis. Residues Cys-145, Cys-147, Cys-182, and His-185 each coordinate Zn(2+).

The protein belongs to the thymidine kinase family. In terms of assembly, homotetramer.

It is found in the cytoplasm. It catalyses the reaction thymidine + ATP = dTMP + ADP + H(+). The protein is Thymidine kinase of Aliivibrio fischeri (strain ATCC 700601 / ES114) (Vibrio fischeri).